We begin with the raw amino-acid sequence, 311 residues long: Cell division protein FtsQ (311 aa).

The interval 1–28 (MTTRSPARPLIARRSTPAPTPAPHDPAP) is disordered. Topologically, residues 1–46 (MTTRSPARPLIARRSTPAPTPAPHDPAPSRLSYRVTRLWLTPIFRK) are cytoplasmic. Residues 47–67 (ALHLGIPVFALFAAVTWYLGD) traverse the membrane as a helical segment. At 68–311 (ETRVAELFEA…AERPDGDTRG (244 aa)) the chain is on the periplasmic side. The region spanning 91-159 (FRVNVLGIDG…GYLAVRIDER (69 aa)) is the POTRA domain.

The protein belongs to the FtsQ/DivIB family. FtsQ subfamily.

Its subcellular location is the cell inner membrane. Its function is as follows. Essential cell division protein. The sequence is that of Cell division protein FtsQ from Jannaschia sp. (strain CCS1).